We begin with the raw amino-acid sequence, 52 residues long: Large ribosomal subunit protein bL33 (52 aa).

It belongs to the bacterial ribosomal protein bL33 family.

The polypeptide is Large ribosomal subunit protein bL33 (Helicobacter acinonychis (strain Sheeba)).